The chain runs to 171 residues: 3-hydroxydecanoyl-[acyl-carrier-protein] dehydratase (171 aa).

Residue His70 is part of the active site.

It belongs to the thioester dehydratase family. FabA subfamily. As to quaternary structure, homodimer.

The protein localises to the cytoplasm. The enzyme catalyses a (3R)-hydroxyacyl-[ACP] = a (2E)-enoyl-[ACP] + H2O. It catalyses the reaction (3R)-hydroxydecanoyl-[ACP] = (2E)-decenoyl-[ACP] + H2O. It carries out the reaction (2E)-decenoyl-[ACP] = (3Z)-decenoyl-[ACP]. It functions in the pathway lipid metabolism; fatty acid biosynthesis. Functionally, necessary for the introduction of cis unsaturation into fatty acids. Catalyzes the dehydration of (3R)-3-hydroxydecanoyl-ACP to E-(2)-decenoyl-ACP and then its isomerization to Z-(3)-decenoyl-ACP. Can catalyze the dehydratase reaction for beta-hydroxyacyl-ACPs with saturated chain lengths up to 16:0, being most active on intermediate chain length. The sequence is that of 3-hydroxydecanoyl-[acyl-carrier-protein] dehydratase from Xanthomonas euvesicatoria pv. vesicatoria (strain 85-10) (Xanthomonas campestris pv. vesicatoria).